The sequence spans 225 residues: PKHD-type hydroxylase YbiX (225 aa).

The Fe2OG dioxygenase domain occupies 78–177 (TLSTPLFNRY…RVASFMWIQS (100 aa)). Residues His96, Asp98, and His158 each coordinate Fe cation. Position 168 (Arg168) interacts with 2-oxoglutarate.

It depends on Fe(2+) as a cofactor. L-ascorbate serves as cofactor.

In Escherichia coli O6:K15:H31 (strain 536 / UPEC), this protein is PKHD-type hydroxylase YbiX.